The primary structure comprises 231 residues: MTVHPPVVGHCDELQVALGAFRASAHVTQRWGDRLAAVLGGGGRLLAAGNGGSAAQAQHLTAELVGRYRDDRPPFSAIALHADTSSTTAIANDYGVDEVFARQVRAHGRKGDVLMLLSTSGASANLLSAADAARAAGVRVWALTGRAPNPLMAGSDESLCVEAPSTATVQEIHLVAVHMICAAFDAALERGEHGARAAGSAASTGRAARRERAASTGRAAGAGRAAQRKRR.

One can recognise an SIS domain in the interval 35–190 (LAAVLGGGGR…CAAFDAALER (156 aa)). Residue 50-52 (NGG) participates in substrate binding. Positions 59 and 63 each coordinate Zn(2+). Substrate contacts are provided by residues glutamate 63, 92–93 (ND), 118–120 (STS), serine 123, and glutamine 170. Zn(2+) contacts are provided by glutamine 170 and histidine 178. Composition is skewed to low complexity over residues 197-206 (AAGSAASTGR) and 214-225 (ASTGRAAGAGRA). The disordered stretch occupies residues 197–231 (AAGSAASTGRAARRERAASTGRAAGAGRAAQRKRR).

Belongs to the SIS family. GmhA subfamily. Requires Zn(2+) as cofactor.

Its subcellular location is the cytoplasm. It catalyses the reaction 2 D-sedoheptulose 7-phosphate = D-glycero-alpha-D-manno-heptose 7-phosphate + D-glycero-beta-D-manno-heptose 7-phosphate. It participates in carbohydrate biosynthesis; D-glycero-D-manno-heptose 7-phosphate biosynthesis; D-glycero-alpha-D-manno-heptose 7-phosphate and D-glycero-beta-D-manno-heptose 7-phosphate from sedoheptulose 7-phosphate: step 1/1. In terms of biological role, catalyzes the isomerization of sedoheptulose 7-phosphate in D-glycero-D-manno-heptose 7-phosphate. The chain is Phosphoheptose isomerase from Streptomyces coelicolor (strain ATCC BAA-471 / A3(2) / M145).